We begin with the raw amino-acid sequence, 88 residues long: uncharacterized protein (88 aa).

This is an uncharacterized protein from Vaccinia virus (strain Copenhagen) (VACV).